A 286-amino-acid chain; its full sequence is MERCVRVKSWVEENRASFQPPVCNKLMHREQLKIMFVGGPNTRKDYHIEEGEEVFYQLEGDMVLRVLEQGEHRDVVIRQGEIFLLPARVPHSPQRFANTMGLVIERRRMETELDGLRYYVGDTEDVLFEKWFHCKDLGTQLAPIIQEFFHSEQYRTGKPNPDQLLKEPPFPLSTRSVMEPMSLKAWLESHSRELQAGTSLSLFGDSYETQVIAHGQGSSKGPRQDVDVWLWQLEGSSKVTMGGQCVALAPDDSLLVPAGFSYMWERAQGSVALSVTQDPACKKPLG.

A domain A (catalytic) region spans residues 1-160 (MERCVRVKSW…SEQYRTGKPN (160 aa)). Residue Arg43 participates in O2 binding. 3 residues coordinate Fe cation: His47, Glu53, and His91. Glu53 contributes to the substrate binding site. Substrate is bound by residues Arg95 and Glu105. A linker region spans residues 161–177 (PDQLLKEPPFPLSTRSV). The interval 178–286 (MEPMSLKAWL…QDPACKKPLG (109 aa)) is domain B.

This sequence belongs to the 3-HAO family. Monomer. Requires Fe(2+) as cofactor.

It is found in the cytoplasm. The protein resides in the cytosol. It carries out the reaction 3-hydroxyanthranilate + O2 = (2Z,4Z)-2-amino-3-carboxymuconate 6-semialdehyde. The protein operates within cofactor biosynthesis; NAD(+) biosynthesis; quinolinate from L-kynurenine: step 3/3. In terms of biological role, catalyzes the oxidative ring opening of 3-hydroxyanthranilate to 2-amino-3-carboxymuconate semialdehyde, which spontaneously cyclizes to quinolinate. The sequence is that of 3-hydroxyanthranilate 3,4-dioxygenase (Haao) from Rattus norvegicus (Rat).